The primary structure comprises 260 residues: Crotonyl-CoA hydratase (260 aa).

The active-site Nucleophile is the Glu-114. Glu-134 serves as the catalytic Proton acceptor.

Belongs to the enoyl-CoA hydratase/isomerase family. In terms of assembly, homotetramer.

It is found in the cytoplasm. It carries out the reaction 3-hydroxybutanoyl-CoA = (2E)-butenoyl-CoA + H2O. It catalyses the reaction a short-chain (3S)-3-hydroxyacyl-CoA = a short-chain (2E)-enoyl-CoA + H2O. It participates in lipid metabolism; butanoate metabolism. Functionally, involved in syntrophic growth of S.wolfei with butyrate, as part of the butyrate oxidation pathway. Probably catalyzes the hydration of crotonyl-CoA to 3-hydroxybutyryl-CoA. This is Crotonyl-CoA hydratase from Syntrophomonas wolfei subsp. wolfei (strain DSM 2245B / Goettingen).